Consider the following 125-residue polypeptide: Glycine cleavage system H protein (125 aa).

The Lipoyl-binding domain maps to 22-104 (SYVIGITDFA…YDTGWILKLE (83 aa)). Lys-63 carries the N6-lipoyllysine modification.

This sequence belongs to the GcvH family. The glycine cleavage system is composed of four proteins: P, T, L and H. (R)-lipoate is required as a cofactor.

The glycine cleavage system catalyzes the degradation of glycine. The H protein shuttles the methylamine group of glycine from the P protein to the T protein. Functionally, is also involved in protein lipoylation via its role as an octanoyl/lipoyl carrier protein intermediate. This is Glycine cleavage system H protein from Listeria monocytogenes serotype 4a (strain HCC23).